We begin with the raw amino-acid sequence, 142 residues long: MKTFSAKPAEVKRDWYVIDATDKVLGRVASEVARRLRGKHKPEFTPHVDTGDFIIIVNAAKLRVTGTKEQDKKYYRHSGYPGGIYETTFGKMQQRFPGRALEKAVKGMLPKGPLGYAMIKKLKVYAEAEHPHSAQQPKVLEI.

This sequence belongs to the universal ribosomal protein uL13 family. As to quaternary structure, part of the 50S ribosomal subunit.

This protein is one of the early assembly proteins of the 50S ribosomal subunit, although it is not seen to bind rRNA by itself. It is important during the early stages of 50S assembly. The sequence is that of Large ribosomal subunit protein uL13 from Cupriavidus metallidurans (strain ATCC 43123 / DSM 2839 / NBRC 102507 / CH34) (Ralstonia metallidurans).